Consider the following 750-residue polypeptide: Photosystem I P700 chlorophyll a apoprotein A1 (750 aa).

The next 8 helical transmembrane spans lie at 70–93 (VFSA…FHGA), 156–179 (LYCT…FHYH), 195–219 (LNHH…HVSL), 291–309 (IVHH…GHMY), 346–369 (WHAQ…HHMY), 385–411 (LSLF…IFMV), 433–455 (AIIS…LYIH), and 531–549 (FLVH…LILL). Positions 573 and 582 each coordinate [4Fe-4S] cluster. 2 helical membrane passes run 589–610 (HVFL…HFSW) and 664–686 (LSAY…MFLF). His675 lines the chlorophyll a' pocket. Chlorophyll a-binding residues include Met683 and Tyr691. Trp692 lines the phylloquinone pocket. The helical transmembrane segment at 724–744 (AVGVTHYLLGGIATTWAFFLA) threads the bilayer.

Belongs to the PsaA/PsaB family. In terms of assembly, the PsaA/B heterodimer binds the P700 chlorophyll special pair and subsequent electron acceptors. PSI consists of a core antenna complex that captures photons, and an electron transfer chain that converts photonic excitation into a charge separation. The eukaryotic PSI reaction center is composed of at least 11 subunits. Requires P700 is a chlorophyll a/chlorophyll a' dimer, A0 is one or more chlorophyll a, A1 is one or both phylloquinones and FX is a shared 4Fe-4S iron-sulfur center. as cofactor.

The protein localises to the plastid. The protein resides in the chloroplast thylakoid membrane. The enzyme catalyses reduced [plastocyanin] + hnu + oxidized [2Fe-2S]-[ferredoxin] = oxidized [plastocyanin] + reduced [2Fe-2S]-[ferredoxin]. In terms of biological role, psaA and PsaB bind P700, the primary electron donor of photosystem I (PSI), as well as the electron acceptors A0, A1 and FX. PSI is a plastocyanin-ferredoxin oxidoreductase, converting photonic excitation into a charge separation, which transfers an electron from the donor P700 chlorophyll pair to the spectroscopically characterized acceptors A0, A1, FX, FA and FB in turn. Oxidized P700 is reduced on the lumenal side of the thylakoid membrane by plastocyanin. The chain is Photosystem I P700 chlorophyll a apoprotein A1 from Piper cenocladum (Ant piper).